The following is a 175-amino-acid chain: Adenine phosphoribosyltransferase (175 aa).

This sequence belongs to the purine/pyrimidine phosphoribosyltransferase family. As to quaternary structure, homodimer.

Its subcellular location is the cytoplasm. It catalyses the reaction AMP + diphosphate = 5-phospho-alpha-D-ribose 1-diphosphate + adenine. The protein operates within purine metabolism; AMP biosynthesis via salvage pathway; AMP from adenine: step 1/1. Functionally, catalyzes a salvage reaction resulting in the formation of AMP, that is energically less costly than de novo synthesis. This is Adenine phosphoribosyltransferase from Caldicellulosiruptor bescii (strain ATCC BAA-1888 / DSM 6725 / KCTC 15123 / Z-1320) (Anaerocellum thermophilum).